The following is a 279-amino-acid chain: Epidermal growth factor-like protein 7 (279 aa).

Residues M1 to T21 form the signal peptide. One can recognise an EMI domain in the interval S28 to A109. 9 disulfides stabilise this stretch: C32–C94, C57–C63, C93–C107, C112–C122, C116–C128, C130–C139, C146–C157, C153–C166, and C168–C181. The EGF-like 1 domain maps to G108–Q140. Residues P131–G133 carry the Cell attachment site motif. One can recognise an EGF-like 2; calcium-binding domain in the interval D142–L182. 2 coiled-coil regions span residues S200–L224 and F250–S274.

As to quaternary structure, interacts with ITGAV/ITGB3 in an RGD-dependent manner, increasing endothelial cell's motility.

The protein localises to the secreted. It is found in the extracellular space. Its function is as follows. Regulates vascular tubulogenesis in vivo. Inhibits platelet-derived growth factor (PDGF)-BB-induced smooth muscle cell migration and promotes endothelial cell adhesion to the extracellular matrix and angiogenesis. This chain is Epidermal growth factor-like protein 7 (Egfl7), found in Rattus norvegicus (Rat).